We begin with the raw amino-acid sequence, 45 residues long: Large ribosomal subunit protein bL34 (45 aa).

Positions 1 to 24 (MTKRTFGGTSRKRKRVSGFRVRMR) are disordered. Basic residues predominate over residues 10–24 (SRKRKRVSGFRVRMR).

This sequence belongs to the bacterial ribosomal protein bL34 family.

This chain is Large ribosomal subunit protein bL34, found in Prochlorococcus marinus (strain MIT 9303).